The sequence spans 160 residues: Large ribosomal subunit protein uL11 (160 aa).

Belongs to the universal ribosomal protein uL11 family. As to quaternary structure, part of the ribosomal stalk of the 50S ribosomal subunit. Interacts with L10 and the large rRNA to form the base of the stalk. L10 forms an elongated spine to which L12 dimers bind in a sequential fashion forming a multimeric L10(L12)X complex.

Its function is as follows. Forms part of the ribosomal stalk which helps the ribosome interact with GTP-bound translation factors. This is Large ribosomal subunit protein uL11 from Methanococcus aeolicus (strain ATCC BAA-1280 / DSM 17508 / OCM 812 / Nankai-3).